We begin with the raw amino-acid sequence, 587 residues long: Pectinesterase 2 (587 aa).

A signal peptide spans 1–40 (MAPIKEFISKFSDFKNNKKLILSSAAIALLLLASIVGIAA). N-linked (GlcNAc...) asparagine glycosylation is found at Asn-99 and Asn-218. Substrate contacts are provided by Thr-351 and Gln-381. Asp-404 serves as the catalytic Proton donor. Cys-418 and Cys-438 form a disulfide bridge. Asp-425 serves as the catalytic Nucleophile. The substrate site is built by Arg-493 and Trp-495.

The protein in the N-terminal section; belongs to the PMEI family. In the C-terminal section; belongs to the pectinesterase family. Expressed in flower buds.

It is found in the secreted. It localises to the cell wall. The enzyme catalyses [(1-&gt;4)-alpha-D-galacturonosyl methyl ester](n) + n H2O = [(1-&gt;4)-alpha-D-galacturonosyl](n) + n methanol + n H(+). It participates in glycan metabolism; pectin degradation; 2-dehydro-3-deoxy-D-gluconate from pectin: step 1/5. Functionally, acts in the modification of cell walls via demethylesterification of cell wall pectin. This chain is Pectinesterase 2 (PME2), found in Arabidopsis thaliana (Mouse-ear cress).